A 430-amino-acid chain; its full sequence is Putative O-antigen transporter (430 aa).

A run of 12 helical transmembrane segments spans residues 23-39 (IIIA…LISM), 45-61 (YAIF…CSAV), 96-112 (IAII…SGVI), 131-147 (LFFT…IGAI), 163-179 (LLNA…LLYI), 192-208 (LIVL…CYIV), 236-252 (LFTL…YMVI), 266-282 (VTMK…TAIL), 309-325 (ILLG…FIYL), 342-358 (VSIL…CIRV), 373-389 (LKIL…IGGI), and 400-416 (ISGV…LTVF).

The protein localises to the cell inner membrane. It participates in bacterial outer membrane biogenesis; LPS O-antigen biosynthesis. Functionally, may be involved in the translocation process of the nascent O-polysaccharide molecules and/or its ligation to lipid A core units. This is Putative O-antigen transporter (rfbX) from Salmonella typhimurium (strain LT2 / SGSC1412 / ATCC 700720).